A 656-amino-acid polypeptide reads, in one-letter code: Heat shock 70 kDa protein, mitochondrial (656 aa).

The N-terminal 23 residues, 1–23, are a transit peptide targeting the mitochondrion; the sequence is MFARRLRGAGSLAAASLARWQSS. The segment at 624–656 is disordered; that stretch reads EYQQAAAGNSSSSSGNTDSSQGEQQQQGDQQKQ. Over residues 626 to 656 the composition is skewed to low complexity; the sequence is QQAAAGNSSSSSGNTDSSQGEQQQQGDQQKQ.

The protein belongs to the heat shock protein 70 family.

Its subcellular location is the mitochondrion matrix. The protein resides in the kinetoplast. May participate in eukaryotic mitochondrial DNA replication. The protein is Heat shock 70 kDa protein, mitochondrial (MTP70) of Trypanosoma cruzi.